Consider the following 278-residue polypeptide: TATA box-binding protein-associated factor RNA polymerase I subunit D (278 aa).

2 disordered regions span residues 20–71 (ANRS…SSFE) and 88–116 (KKRY…RNPI). Residues 22-33 (RSDNSSDSSLFK) show a composition bias toward polar residues. Ser-23 bears the Phosphoserine mark. Basic residues predominate over residues 88–99 (KKRYKKKKKRRY). Ser-138 and Ser-234 each carry phosphoserine.

In terms of assembly, component of the transcription factor SL1/TIF-IB complex, composed of TBP and at least TAF1A, TAF1B, TAF1C and TAF1D. Interacts with UBTF.

Its subcellular location is the nucleus. Its function is as follows. Component of the transcription factor SL1/TIF-IB complex, which is involved in the assembly of the PIC (preinitiation complex) during RNA polymerase I-dependent transcription. The rate of PIC formation probably is primarily dependent on the rate of association of SL1/TIF-IB with the rDNA promoter. SL1/TIF-IB is involved in stabilization of nucleolar transcription factor 1/UBTF on rDNA. Formation of SL1/TIF-IB excludes the association of TBP with TFIID subunits. The sequence is that of TATA box-binding protein-associated factor RNA polymerase I subunit D (TAF1D) from Homo sapiens (Human).